We begin with the raw amino-acid sequence, 318 residues long: MKDIILIYMICAPISMIGSLFIIITWLLYAKLKNSGSNFIFFQAISDFFFTSKYIITIIFYYINIPQFSDETSSTDTNPYCFSLGLFSQFFGQATIMWSYTMTVKVFHSYFEMKKKNNNNNIGSNNIGGGGGGNNSNKQNSIDKTLKWYHLFVWGFCLVNATIIGISKQYGPSSTGCWIVGANNPYRFFELVPLYFTITTSIIILILILVKMKKSKPSSLLPTESMRYNQQAREFKIQLMKFVLIFIIFWLPATVLRTLEYFGIEKTFFILLDAVSVSLQALANSLVWATSPQFLKLMKRKVVNKPNKQMEREYLINK.

Topologically, residues 1–3 (MKD) are extracellular. Residues 4 to 24 (IILIYMICAPISMIGSLFIII) traverse the membrane as a helical segment. Over 25–38 (TWLLYAKLKNSGSN) the chain is Cytoplasmic. Residues 39-59 (FIFFQAISDFFFTSKYIITII) form a helical membrane-spanning segment. Topologically, residues 60–83 (FYYINIPQFSDETSSTDTNPYCFS) are extracellular. Residues cysteine 81 and cysteine 177 are joined by a disulfide bond. The helical transmembrane segment at 84–104 (LGLFSQFFGQATIMWSYTMTV) threads the bilayer. Over 105-145 (KVFHSYFEMKKKNNNNNIGSNNIGGGGGGNNSNKQNSIDKT) the chain is Cytoplasmic. A helical transmembrane segment spans residues 146 to 166 (LKWYHLFVWGFCLVNATIIGI). The Extracellular segment spans residues 167–187 (SKQYGPSSTGCWIVGANNPYR). A helical membrane pass occupies residues 188-208 (FFELVPLYFTITTSIIILILI). At 209-234 (LVKMKKSKPSSLLPTESMRYNQQARE) the chain is on the cytoplasmic side. A helical membrane pass occupies residues 235 to 255 (FKIQLMKFVLIFIIFWLPATV). Topologically, residues 256 to 267 (LRTLEYFGIEKT) are extracellular. Residues 268 to 288 (FFILLDAVSVSLQALANSLVW) traverse the membrane as a helical segment. Residues 289-318 (ATSPQFLKLMKRKVVNKPNKQMEREYLINK) lie on the Cytoplasmic side of the membrane.

This sequence belongs to the G-protein coupled receptor 5 family.

The protein localises to the membrane. In terms of biological role, receptor for cAMP. In Dictyostelium discoideum (Social amoeba), this protein is Cyclic AMP receptor-like protein F (crlF).